Reading from the N-terminus, the 216-residue chain is Thiopurine S-methyltransferase (216 aa).

Residues tryptophan 10, leucine 45, glutamate 66, and arginine 123 each coordinate S-adenosyl-L-methionine.

The protein belongs to the class I-like SAM-binding methyltransferase superfamily. TPMT family.

It is found in the cytoplasm. The enzyme catalyses S-adenosyl-L-methionine + a thiopurine = S-adenosyl-L-homocysteine + a thiopurine S-methylether.. The protein is Thiopurine S-methyltransferase of Pseudomonas putida (strain GB-1).